A 187-amino-acid polypeptide reads, in one-letter code: Peptidyl-tRNA hydrolase (187 aa).

Position 18 (Tyr18) interacts with tRNA. His23 functions as the Proton acceptor in the catalytic mechanism. Residues Phe65, Asn67, and Asn113 each coordinate tRNA.

This sequence belongs to the PTH family. As to quaternary structure, monomer.

Its subcellular location is the cytoplasm. It catalyses the reaction an N-acyl-L-alpha-aminoacyl-tRNA + H2O = an N-acyl-L-amino acid + a tRNA + H(+). Its function is as follows. Hydrolyzes ribosome-free peptidyl-tRNAs (with 1 or more amino acids incorporated), which drop off the ribosome during protein synthesis, or as a result of ribosome stalling. Catalyzes the release of premature peptidyl moieties from peptidyl-tRNA molecules trapped in stalled 50S ribosomal subunits, and thus maintains levels of free tRNAs and 50S ribosomes. The chain is Peptidyl-tRNA hydrolase from Coxiella burnetii (strain RSA 331 / Henzerling II).